The sequence spans 1310 residues: MEPPPPLLLLPLALLALLWGGERGAAALPAGCKHDGRARGTGRAAAAAEGKVVCSSLELAQVLPPDTLPNRTVTLILSNNKISELKNGSFSGLSLLERLDLRNNLISRIAPGAFWGLSSLKRLDLTNNRIGCLNADVFRGLTNLVRLNLSGNLFTSLSQGTFDYLGSLRSLEFQTEYLLCDCNILWMHRWVKERNITVRDTRCVYPKSLQAQPVTGVKQELLTCDPPLELPSFYMTPSHRQVVFEGDSLPFQCMASYIDQDMQVLWYQDGRIVETDESQGIFVEKSMIHNCSLIASALTISNIQAGSTGNWGCHVQTKRGNNTRTVDIVVLESSAQYCPPERVVNNKGDFRWPRTLAGITAYLQCTRNTHSSGIYPGSAQDERKAWRRCDRGGFWADDDYSRCQYANDVTRVLYMFNQMPLNLTNAVATARQLLAYTVEAANFSDKMDVIFVAEMIEKFGRFTREEKSKELGDVMVDVASNIMLADERVLWLAQREAKACSRIVQCLQRIATHRLASGAHVYSTYSPNIALEAYVIKAAGFTGMTCSVFQKVAASDRAGLSDYGRRDPDGNLDKQLSFKCNVSSTFSSLALKNTIMEASIQLPSSLLSPKHKREARAADDALYKLQLIAFRNGKLFPATGNSTKLADDGKRRTVVTPVILTKIDGATVDTHHIPVNVTLRRIAHGADAVAAQWDFDLLNGQGGWKSDGCCILYSDENITTIQCGSLGNYAVLMDLTGTELYTPAASLLHPVVYTTAITLLLCLLAVIISYMYHHSLIRISLKSWHMLVNLCFHILLTCVVFVGGITQTRNASVCQAVGIILHYSTLATVLWVGVTARNIYKQVTKKAKRCQDPDEPPAPPRPMLRFYLIGGGIPIIVCGITAAANIKNYGSRPSAPYCWMAWEPSLGAFYGPASFITFVNCMYFLSIFIQLKRHPERKYELKEPTEEQQRLAANENGEINHQDSMSLSLISTSTLENEHSFQSQLLGASLTLLLYVILWMFGAMAVSLYYPLDLVFSFFFGATCLSFSAFMMVHHCINREDVRLAWIMMCCPGRSSYSVQVNVQPPNSSATNGEAPKCTNSSAESSCTNKSASSFKNSSQGCKLTNLQAAAAQYHSNALPVNATPQLDNSLTEHSMDNDIKMHVAPLDVQFRTNVHPSRHHKNRSKGHRASRLTVLREYAYDVPTSVEGSVQNGLPKSRPGSNEGHSRSRRAYLAYRERQYNPPQQDSSDACSTLPKSSRNVEKPVSTSSKKDAPRKPAAADLESQQKSYGLNLAVQNGPVKSNGQEGPLLATDVTGNVRTGLWKHETTV.

The signal sequence occupies residues 1–27 (MEPPPPLLLLPLALLALLWGGERGAAA). The 43-residue stretch at 28–70 (LPAGCKHDGRARGTGRAAAAAEGKVVCSSLELAQVLPPDTLPN) folds into the LRRNT domain. At 28–747 (LPAGCKHDGR…TELYTPAASL (720 aa)) the chain is on the extracellular side. N-linked (GlcNAc...) asparagine glycans are attached at residues Asn70 and Asn87. 4 LRR repeats span residues 71–92 (RTVTLILSNNKISELKNGSFSG), 95–116 (LLERLDLRNNLISRIAPGAFWG), 119–140 (SLKRLDLTNNRIGCLNADVFRG), and 143–164 (NLVRLNLSGNLFTSLSQGTFDY). Asn148, Asn195, Asn290, Asn321, Asn422, Asn442, Asn581, Asn641, Asn676, and Asn717 each carry an N-linked (GlcNAc...) asparagine glycan. The region spanning 176–226 (EYLLCDCNILWMHRWVKERNITVRDTRCVYPKSLQAQPVTGVKQELLTCDP) is the LRRCT domain. One can recognise an Ig-like domain in the interval 231 to 329 (PSFYMTPSHR…GNNTRTVDIV (99 aa)). The cysteines at positions 253 and 313 are disulfide-linked. The GAIN-B domain occupies 572–739 (LDKQLSFKCN…AVLMDLTGTE (168 aa)). Residues 690–739 (AAQWDFDLLNGQGGWKSDGCCILYSDENITTIQCGSLGNYAVLMDLTGTE) form a GPS region. Cysteines 709 and 723 form a disulfide. Residues 748-768 (LHPVVYTTAITLLLCLLAVII) form a helical membrane-spanning segment. The Cytoplasmic segment spans residues 769-785 (SYMYHHSLIRISLKSWH). A helical membrane pass occupies residues 786-806 (MLVNLCFHILLTCVVFVGGIT). Topologically, residues 807-815 (QTRNASVCQ) are extracellular. Asn810 is a glycosylation site (N-linked (GlcNAc...) asparagine). Residues 816 to 836 (AVGIILHYSTLATVLWVGVTA) form a helical membrane-spanning segment. The Cytoplasmic portion of the chain corresponds to 837 to 865 (RNIYKQVTKKAKRCQDPDEPPAPPRPMLR). Residues 866 to 886 (FYLIGGGIPIIVCGITAAANI) form a helical membrane-spanning segment. The Extracellular segment spans residues 887-908 (KNYGSRPSAPYCWMAWEPSLGA). A helical transmembrane segment spans residues 909 to 929 (FYGPASFITFVNCMYFLSIFI). Residues 930–985 (QLKRHPERKYELKEPTEEQQRLAANENGEINHQDSMSLSLISTSTLENEHSFQSQL) lie on the Cytoplasmic side of the membrane. The helical transmembrane segment at 986-1006 (LGASLTLLLYVILWMFGAMAV) threads the bilayer. The Extracellular segment spans residues 1007–1013 (SLYYPLD). Residues 1014–1034 (LVFSFFFGATCLSFSAFMMVH) traverse the membrane as a helical segment. Over 1035 to 1310 (HCINREDVRL…TGLWKHETTV (276 aa)) the chain is Cytoplasmic. 3 disordered regions span residues 1065–1084 (PPNSSATNGEAPKCTNSSAE), 1187–1208 (VEGSVQNGLPKSRPGSNEGHSR), and 1221–1264 (YNPP…ADLE). Polar residues predominate over residues 1222 to 1239 (NPPQQDSSDACSTLPKSS). The PDZ-binding motif lies at 1308–1310 (TTV).

This sequence belongs to the G-protein coupled receptor 2 family. Adhesion G-protein coupled receptor (ADGR) subfamily. In terms of assembly, interacts (via PDZ-binding motif) with DLG1. As to expression, expressed by spermatogonial progenitor cells located within the outer cell layer of the seminiferous tubule and by multipotent adult spermatogonial-derived stem cells.

It localises to the membrane. In terms of biological role, orphan receptor that may have a role in planar cell polarity pathway. This is Adhesion G protein-coupled receptor A3 (Adgra3) from Mus musculus (Mouse).